We begin with the raw amino-acid sequence, 1432 residues long: Gag-Pol polyprotein (1432 aa).

2 consecutive CCHC-type zinc fingers follow at residues 368–385 (QRCY…DCKN) and 386–403 (QKCF…NCKS). The Peptidase A2 domain occupies 452 to 525 (VRALIDTGAD…TPVNLLGRSV (74 aa)). Residue aspartate 457 is the For protease activity; shared with dimeric partner of the active site. One can recognise a Reverse transcriptase domain in the interval 579 to 766 (DGKISRTPWD…EQVQWLGYEL (188 aa)). Residues aspartate 645, aspartate 720, and aspartate 721 each contribute to the Mg(2+) site. Positions 815 to 843 (KGKTDLKDKIKLTEEAIQCLETVNKRLKD) form a coiled coil. The 121-residue stretch at 959 to 1079 (IERYPTYYTD…VDQEVQKALQ (121 aa)) folds into the RNase H type-1 domain. The Mg(2+) site is built by aspartate 968, glutamate 999, aspartate 1019, and aspartate 1071. The Integrase-type zinc-finger motif lies at 1157-1198 (EAIPQAIEEHEKWHTTAEILAREFQLPRRVAREIVHRCQACK). Residues histidine 1166, histidine 1170, cysteine 1194, and cysteine 1197 each coordinate Zn(2+). Residues 1206 to 1358 (RGTNPRERFL…TPYEIYLESE (153 aa)) enclose the Integrase catalytic domain. Residues aspartate 1219 and aspartate 1271 each contribute to the Mg(2+) site. A DNA-binding region (integrase-type) is located at residues 1376–1422 (KWAYVRDKRKVWKGPYKVLWDGEGAAVVEENAMPTLYPHRHMRFIPP).

In terms of processing, specific enzymatic cleavages by the viral protease yield mature proteins. The protease is released by autocatalytic cleavage. The polyprotein is cleaved during and after budding, this process is termed maturation.

The protein localises to the virion. The catalysed reaction is DNA(n) + a 2'-deoxyribonucleoside 5'-triphosphate = DNA(n+1) + diphosphate. It catalyses the reaction Endohydrolysis of RNA in RNA/DNA hybrids. Three different cleavage modes: 1. sequence-specific internal cleavage of RNA. Human immunodeficiency virus type 1 and Moloney murine leukemia virus enzymes prefer to cleave the RNA strand one nucleotide away from the RNA-DNA junction. 2. RNA 5'-end directed cleavage 13-19 nucleotides from the RNA end. 3. DNA 3'-end directed cleavage 15-20 nucleotides away from the primer terminus.. It carries out the reaction 3'-end directed exonucleolytic cleavage of viral RNA-DNA hybrid.. Matrix protein p16 forms the outer shell of the core of the virus, lining the inner surface of the viral membrane. Functionally, capsid protein p26 forms the conical core of the virus that encapsulates the genomic RNA-nucleocapsid complex. In terms of biological role, the aspartyl protease mediates proteolytic cleavages of Gag and Gag-Pol polyproteins during or shortly after the release of the virion from the plasma membrane. Cleavages take place as an ordered, step-wise cascade to yield mature proteins. This process is called maturation. Displays maximal activity during the budding process just prior to particle release from the cell. Its function is as follows. Reverse transcriptase/ribonuclease H (RT) is a multifunctional enzyme that converts the viral RNA genome into dsDNA in the cytoplasm, shortly after virus entry into the cell. This enzyme displays a DNA polymerase activity that can copy either DNA or RNA templates, and a ribonuclease H (RNase H) activity that cleaves the RNA strand of RNA-DNA heteroduplexes in a partially processive 3' to 5' endonucleasic mode. Conversion of viral genomic RNA into dsDNA requires many steps. A tRNA binds to the primer-binding site (PBS) situated at the 5'-end of the viral RNA. RT uses the 3' end of the tRNA primer to perform a short round of RNA-dependent minus-strand DNA synthesis. The reading proceeds through the U5 region and ends after the repeated (R) region which is present at both ends of viral RNA. The portion of the RNA-DNA heteroduplex is digested by the RNase H, resulting in a ssDNA product attached to the tRNA primer. This ssDNA/tRNA hybridizes with the identical R region situated at the 3' end of viral RNA. This template exchange, known as minus-strand DNA strong stop transfer, can be either intra- or intermolecular. RT uses the 3' end of this newly synthesized short ssDNA to perform the RNA-dependent minus-strand DNA synthesis of the whole template. RNase H digests the RNA template except for a polypurine tract (PPT) situated at the 5'-end of the genome. It is not clear if both polymerase and RNase H activities are simultaneous. RNase H probably can proceed both in a polymerase-dependent (RNA cut into small fragments by the same RT performing DNA synthesis) and a polymerase-independent mode (cleavage of remaining RNA fragments by free RTs). Secondly, RT performs DNA-directed plus-strand DNA synthesis using the PPT that has not been removed by RNase H as primer. PPT and tRNA primers are then removed by RNase H. The 3' and 5' ssDNA PBS regions hybridize to form a circular dsDNA intermediate. Strand displacement synthesis by RT to the PBS and PPT ends produces a blunt ended, linear dsDNA copy of the viral genome that includes long terminal repeats (LTRs) at both ends. Integrase catalyzes viral DNA integration into the host chromosome, by performing a series of DNA cutting and joining reactions. This enzyme activity takes place after virion entry into a cell and reverse transcription of the RNA genome in dsDNA. This is Gag-Pol polyprotein (gag-pol) from Jembrana disease virus (JDV).